Here is a 379-residue protein sequence, read N- to C-terminus: Alanine racemase (379 aa).

The active-site Proton acceptor; specific for D-alanine is the Lys-37. Lys-37 bears the N6-(pyridoxal phosphate)lysine mark. Arg-137 serves as a coordination point for substrate. Tyr-269 functions as the Proton acceptor; specific for L-alanine in the catalytic mechanism. Met-317 is a substrate binding site.

The protein belongs to the alanine racemase family. The cofactor is pyridoxal 5'-phosphate.

The enzyme catalyses L-alanine = D-alanine. The protein operates within amino-acid biosynthesis; D-alanine biosynthesis; D-alanine from L-alanine: step 1/1. Catalyzes the interconversion of L-alanine and D-alanine. May also act on other amino acids. The protein is Alanine racemase (alr) of Citrifermentans bemidjiense (strain ATCC BAA-1014 / DSM 16622 / JCM 12645 / Bem) (Geobacter bemidjiensis).